The following is a 135-amino-acid chain: Ribosome-binding factor A (135 aa).

The protein belongs to the RbfA family. Monomer. Binds 30S ribosomal subunits, but not 50S ribosomal subunits or 70S ribosomes.

The protein localises to the cytoplasm. Its function is as follows. One of several proteins that assist in the late maturation steps of the functional core of the 30S ribosomal subunit. Associates with free 30S ribosomal subunits (but not with 30S subunits that are part of 70S ribosomes or polysomes). Required for efficient processing of 16S rRNA. May interact with the 5'-terminal helix region of 16S rRNA. The chain is Ribosome-binding factor A from Caldicellulosiruptor saccharolyticus (strain ATCC 43494 / DSM 8903 / Tp8T 6331).